We begin with the raw amino-acid sequence, 93 residues long: Cell division protein FtsB (93 aa).

Residues 1-3 (MRI) are Cytoplasmic-facing. The chain crosses the membrane as a helical span at residues 4-21 (FVIALTLLFGWLQYTLWF). Over 22–93 (GKNGVSDYYT…FYRIVDEEEH (72 aa)) the chain is Periplasmic. Positions 31–75 (TVEDEIEVQQQVNSKLQARNNEMFAEIDDLRQGLDAIEERARHEL) form a coiled coil.

The protein belongs to the FtsB family. In terms of assembly, part of a complex composed of FtsB, FtsL and FtsQ.

It is found in the cell inner membrane. Functionally, essential cell division protein. May link together the upstream cell division proteins, which are predominantly cytoplasmic, with the downstream cell division proteins, which are predominantly periplasmic. The polypeptide is Cell division protein FtsB (Vibrio campbellii (strain ATCC BAA-1116)).